The sequence spans 450 residues: Salicylate synthase (450 aa).

The Proton donor role is filled by Glu252. Gly270 to Thr271 serves as a coordination point for substrate. Residue Glu297 participates in Mg(2+) binding. Substrate-binding positions include Tyr385, Arg405, and Gly419 to Gly421. Positions 431 and 434 each coordinate Mg(2+). Residue Lys438 coordinates substrate.

The protein belongs to the anthranilate synthase component I family. Salicylate synthase subfamily. In terms of assembly, monomer. Mg(2+) is required as a cofactor.

It catalyses the reaction chorismate = isochorismate. The enzyme catalyses isochorismate = salicylate + pyruvate. The catalysed reaction is chorismate = prephenate. It functions in the pathway siderophore biosynthesis; mycobactin biosynthesis. Its function is as follows. Involved in the incorporation of salicylate into the virulence-conferring salicylate-based siderophore mycobactin. Catalyzes the initial conversion of chorismate to yield the intermediate isochorismate (isochorismate synthase activity), and the subsequent elimination of the enolpyruvyl side chain in a lyase reaction to give salicylate (isochorismate pyruvate-lyase activity). In the absence of magnesium, MbtI displays a chorismate mutase activity and converts chorismate to prephenate. This Mycobacterium bovis (strain ATCC BAA-935 / AF2122/97) protein is Salicylate synthase (mbtI).